We begin with the raw amino-acid sequence, 295 residues long: Protoheme IX farnesyltransferase (295 aa).

A run of 9 helical transmembrane segments spans residues 8–28 (VTKP…FLLA), 35–55 (YPLF…GCVF), 74–94 (VLVK…LLGI), 106–125 (PLAM…VYSL), 132–152 (VYGT…GYCA), 162–182 (LILL…IAIF), 208–228 (ITLY…GGYA), 233–253 (LVVA…GYKA), and 264–284 (FVFS…DFMV).

Belongs to the UbiA prenyltransferase family. Protoheme IX farnesyltransferase subfamily.

It localises to the cell inner membrane. It carries out the reaction heme b + (2E,6E)-farnesyl diphosphate + H2O = Fe(II)-heme o + diphosphate. Its pathway is porphyrin-containing compound metabolism; heme O biosynthesis; heme O from protoheme: step 1/1. In terms of biological role, converts heme B (protoheme IX) to heme O by substitution of the vinyl group on carbon 2 of heme B porphyrin ring with a hydroxyethyl farnesyl side group. This Cronobacter sakazakii (strain ATCC BAA-894) (Enterobacter sakazakii) protein is Protoheme IX farnesyltransferase.